The sequence spans 230 residues: Ribose-5-phosphate isomerase A (230 aa).

Substrate contacts are provided by residues Thr32–Thr35, Asp85–Asp88, and Lys98–Gly101. Glu107 acts as the Proton acceptor in catalysis. Lys125 serves as a coordination point for substrate.

This sequence belongs to the ribose 5-phosphate isomerase family. As to quaternary structure, homodimer.

The enzyme catalyses aldehydo-D-ribose 5-phosphate = D-ribulose 5-phosphate. The protein operates within carbohydrate degradation; pentose phosphate pathway; D-ribose 5-phosphate from D-ribulose 5-phosphate (non-oxidative stage): step 1/1. Catalyzes the reversible conversion of ribose-5-phosphate to ribulose 5-phosphate. The sequence is that of Ribose-5-phosphate isomerase A from Burkholderia vietnamiensis (strain G4 / LMG 22486) (Burkholderia cepacia (strain R1808)).